The sequence spans 98 residues: Integration host factor subunit alpha (98 aa).

The span at 53-69 (DLREKSERPGRNPKTGE) shows a compositional bias: basic and acidic residues. Residues 53–73 (DLREKSERPGRNPKTGEDIPI) form a disordered region.

This sequence belongs to the bacterial histone-like protein family. In terms of assembly, heterodimer of an alpha and a beta chain.

Its function is as follows. This protein is one of the two subunits of integration host factor, a specific DNA-binding protein that functions in genetic recombination as well as in transcriptional and translational control. This is Integration host factor subunit alpha from Aliivibrio salmonicida (strain LFI1238) (Vibrio salmonicida (strain LFI1238)).